Consider the following 243-residue polypeptide: UPF0758 protein Ava_0172 (243 aa).

Positions 113–235 (PIDSPVAAVA…HQSLREVTTL (123 aa)) constitute an MPN domain. Residues His-184, His-186, and Asp-197 each coordinate Zn(2+). Residues 184–197 (HNHPSGNVEPSPED) carry the JAMM motif motif.

Belongs to the UPF0758 family.

This is UPF0758 protein Ava_0172 from Trichormus variabilis (strain ATCC 29413 / PCC 7937) (Anabaena variabilis).